The primary structure comprises 234 residues: Ribose-5-phosphate isomerase A (234 aa).

Substrate is bound by residues 34–37 (TGST), 90–93 (DGAD), and 103–106 (KGGG). The Proton acceptor role is filled by Glu-112. Residue Lys-130 participates in substrate binding.

Belongs to the ribose 5-phosphate isomerase family. In terms of assembly, homodimer.

It carries out the reaction aldehydo-D-ribose 5-phosphate = D-ribulose 5-phosphate. Its pathway is carbohydrate degradation; pentose phosphate pathway; D-ribose 5-phosphate from D-ribulose 5-phosphate (non-oxidative stage): step 1/1. In terms of biological role, catalyzes the reversible conversion of ribose-5-phosphate to ribulose 5-phosphate. In Methanosarcina acetivorans (strain ATCC 35395 / DSM 2834 / JCM 12185 / C2A), this protein is Ribose-5-phosphate isomerase A.